Consider the following 420-residue polypeptide: Glucose-1-phosphate adenylyltransferase (420 aa).

Residues Tyr-107, Gly-172, 187 to 188 (EK), and Ser-205 contribute to the alpha-D-glucose 1-phosphate site.

Belongs to the bacterial/plant glucose-1-phosphate adenylyltransferase family. As to quaternary structure, homotetramer.

The catalysed reaction is alpha-D-glucose 1-phosphate + ATP + H(+) = ADP-alpha-D-glucose + diphosphate. It functions in the pathway glycan biosynthesis; glycogen biosynthesis. In terms of biological role, involved in the biosynthesis of ADP-glucose, a building block required for the elongation reactions to produce glycogen. Catalyzes the reaction between ATP and alpha-D-glucose 1-phosphate (G1P) to produce pyrophosphate and ADP-Glc. The protein is Glucose-1-phosphate adenylyltransferase of Rhodopseudomonas palustris (strain TIE-1).